Here is a 574-residue protein sequence, read N- to C-terminus: Sorting nexin-33 (574 aa).

The SH3 domain maps to Met1–Ser61. Positions Ala68–Asp119 are disordered. A phosphoserine mark is found at Ser77 and Ser92. Acidic residues predominate over residues Phe109–Asp119. Positions Phe230–Gln340 constitute a PX domain. Residues Leu371–Leu574 form the BAR domain.

It belongs to the sorting nexin family. In terms of assembly, homodimer (via BAR domain). Interacts with ADAM15. Interacts with FASLG. Interacts (via SH3 domain) with DNM1 and DNM2. Interacts with WASL. Interacts with FCHSD1 (via the F-BAR domain). In terms of processing, phosphorylated. In terms of tissue distribution, detected in heart and pancreas.

It localises to the cytoplasm. The protein resides in the cytosol. Its subcellular location is the membrane. It is found in the cytoplasmic vesicle membrane. In terms of biological role, plays a role in the reorganization of the cytoskeleton, endocytosis and cellular vesicle trafficking via its interactions with membranes, WASL, DNM1 and DNM2. Acts both during interphase and at the end of mitotic cell divisions. Required for efficient progress through mitosis and cytokinesis. Required for normal formation of the cleavage furrow at the end of mitosis. Modulates endocytosis of cell-surface proteins, such as APP and PRNP; this then modulates the secretion of APP and PRNP peptides. Promotes membrane tubulation (in vitro). May promote the formation of macropinosomes. The chain is Sorting nexin-33 (SNX33) from Homo sapiens (Human).